The sequence spans 423 residues: N-acylneuraminate cytidylyltransferase B (423 aa).

The substrate site is built by Arg-30, Asn-40, Arg-88, Ser-97, Ser-99, and Gln-120. Residue Arg-178 is part of the active site.

The protein belongs to the CMP-NeuNAc synthase family. Homotetramer.

The protein resides in the cytoplasm. It carries out the reaction an N-acylneuraminate + CTP = a CMP-N-acyl-beta-neuraminate + diphosphate. The protein operates within amino-sugar metabolism; N-acetylneuraminate metabolism. Catalyzes the activation of 2-keto-3-deoxy-D-glycero-D-galacto-nononic acid (KDN) to cytidine 5'-monophosphate 2-keto-3-deoxy-D-glycero-D-galacto-nononic acid (CMP-KDN), a substrate required for the addition of sialic acid. Also has weak activity towards N-acetylneuraminic acid (NeuNAc) and N-glycolylneuraminic acid (Neu5Gc). This is N-acylneuraminate cytidylyltransferase B from Danio rerio (Zebrafish).